The primary structure comprises 552 residues: Methyl-coenzyme M reductase II subunit alpha (552 aa).

Q150 is a coenzyme F430 binding site. Coenzyme B is bound by residues R228, 259–260 (KH), and R273. Residues Y335 and Y446 each contribute to the coenzyme M site.

It belongs to the methyl-coenzyme M reductase alpha subunit family. In terms of assembly, MCR is a hexamer of two alpha, two beta, and two gamma chains, forming a dimer of heterotrimers. Requires coenzyme F430 as cofactor.

It catalyses the reaction coenzyme B + methyl-coenzyme M = methane + coenzyme M-coenzyme B heterodisulfide. It functions in the pathway one-carbon metabolism; methyl-coenzyme M reduction; methane from methyl-coenzyme M: step 1/1. Its function is as follows. Component of the methyl-coenzyme M reductase (MCR) I that catalyzes the reductive cleavage of methyl-coenzyme M (CoM-S-CH3 or 2-(methylthio)ethanesulfonate) using coenzyme B (CoB or 7-mercaptoheptanoylthreonine phosphate) as reductant which results in the production of methane and the mixed heterodisulfide of CoB and CoM (CoM-S-S-CoB). This is the final step in methanogenesis. The polypeptide is Methyl-coenzyme M reductase II subunit alpha (mrtA) (Methanocaldococcus jannaschii (strain ATCC 43067 / DSM 2661 / JAL-1 / JCM 10045 / NBRC 100440) (Methanococcus jannaschii)).